The following is a 266-amino-acid chain: MAKMTILKMKARLEKELDAPNRQFAYNRDNDTLSVTQNGKKVTLTIPQIVANYENDGDAAVEKIVYYVEEGFRAAAGNVELKNNQANIYPVVRATSFPSKTKAGEVLLTDEHTAETKIFYAFDLGKSYRFIEEGMLEKAQLTHKEIREAAFRNLANLAIPLKKDAVNGNDFYFVRTNDGYDASRLLNEAFLREMREKITGEMVLAVPHQDVLIIGDIQDNTGYDVLAHMTMDFFADGLVPITSLPFVYNNGKLEPIFIMAKNRLKE.

Belongs to the UPF0354 family.

This Listeria monocytogenes serotype 4a (strain HCC23) protein is UPF0354 protein LMHCC_0955.